A 610-amino-acid polypeptide reads, in one-letter code: UvrABC system protein C (610 aa).

The 79-residue stretch at 16 to 94 (SQPGVYRMYD…IKLYQPRYNV (79 aa)) folds into the GIY-YIG domain. The region spanning 204 to 239 (DQVLTQLIARMEKASQDLAFEEAARIRDQIQAVRRV) is the UVR domain.

This sequence belongs to the UvrC family. In terms of assembly, interacts with UvrB in an incision complex.

It localises to the cytoplasm. The UvrABC repair system catalyzes the recognition and processing of DNA lesions. UvrC both incises the 5' and 3' sides of the lesion. The N-terminal half is responsible for the 3' incision and the C-terminal half is responsible for the 5' incision. The chain is UvrABC system protein C from Salmonella typhi.